The following is a 149-amino-acid chain: Large ribosomal subunit protein uL13 (149 aa).

It belongs to the universal ribosomal protein uL13 family. Part of the 50S ribosomal subunit.

In terms of biological role, this protein is one of the early assembly proteins of the 50S ribosomal subunit, although it is not seen to bind rRNA by itself. It is important during the early stages of 50S assembly. The polypeptide is Large ribosomal subunit protein uL13 (Thermobifida fusca (strain YX)).